The sequence spans 553 residues: Glucagon-like peptide 2 receptor (553 aa).

The Extracellular portion of the chain corresponds to 1 to 173 (MKLGSSRAGP…SFKQNVDRYA (173 aa)). Cystine bridges form between C83/C105, C96/C137, and C118/C159. 4 N-linked (GlcNAc...) asparagine glycosylation sites follow: N97, N113, N148, and N162. Residues 174–198 (LLSTLQLMYTVGYSFSLISLFLALT) traverse the membrane as a helical segment. Topologically, residues 199-210 (LLLFLRKLHCTR) are cytoplasmic. The chain crosses the membrane as a helical span at residues 211–235 (NYIHMNLFASFILRTLAVLVKDVVF). Residues 236–261 (YNSYSKRPDNENGWMSYLSEMSTSCR) lie on the Extracellular side of the membrane. The helical transmembrane segment at 262–285 (SVQVLLHYFVGANYLWLLVEGLYL) threads the bilayer. The Cytoplasmic portion of the chain corresponds to 286–299 (HTLLEPTVLPERRL). A helical transmembrane segment spans residues 300-321 (WPRYLLLGWAFPVLFVVPWGFA). Topologically, residues 322 to 339 (RAHLENTGCWTTNGNKKI) are extracellular. Residues 340–362 (WWIIRGPMMLCVTVNFFIFLKIL) form a helical membrane-spanning segment. Residues 363-386 (KLLISKLKAHQMCFRDYKYRLAKS) are Cytoplasmic-facing. Residues 387–405 (TLVLIPLLGVHEILFSFIT) traverse the membrane as a helical segment. Residues 406-417 (DDQVEGFAKLIR) lie on the Extracellular side of the membrane. The helical transmembrane segment at 418–438 (LFIQLTLSSFHGFLVALQYGF) threads the bilayer. Residues 439–550 (ANGEVKAELR…ANTMEEILEE (112 aa)) lie on the Cytoplasmic side of the membrane.

It belongs to the G-protein coupled receptor 2 family.

It localises to the cell membrane. Functionally, this is a receptor for glucagon-like peptide 2. The activity of this receptor is mediated by G proteins which activate adenylyl cyclase. This chain is Glucagon-like peptide 2 receptor (GLP2R), found in Homo sapiens (Human).